Consider the following 129-residue polypeptide: Phosphoribosyl-AMP cyclohydrolase (129 aa).

Residue Asp-76 coordinates Mg(2+). Cys-77 contacts Zn(2+). Residues Asp-78 and Asp-80 each contribute to the Mg(2+) site. Cys-97 and Cys-104 together coordinate Zn(2+).

This sequence belongs to the PRA-CH family. As to quaternary structure, homodimer. The cofactor is Mg(2+). Requires Zn(2+) as cofactor.

It is found in the cytoplasm. It catalyses the reaction 1-(5-phospho-beta-D-ribosyl)-5'-AMP + H2O = 1-(5-phospho-beta-D-ribosyl)-5-[(5-phospho-beta-D-ribosylamino)methylideneamino]imidazole-4-carboxamide. It functions in the pathway amino-acid biosynthesis; L-histidine biosynthesis; L-histidine from 5-phospho-alpha-D-ribose 1-diphosphate: step 3/9. In terms of biological role, catalyzes the hydrolysis of the adenine ring of phosphoribosyl-AMP. The chain is Phosphoribosyl-AMP cyclohydrolase from Leptothrix cholodnii (strain ATCC 51168 / LMG 8142 / SP-6) (Leptothrix discophora (strain SP-6)).